The sequence spans 248 residues: Cytochrome c oxidase subunit 2 (248 aa).

Residues 1–39 are Mitochondrial intermembrane-facing; sequence MMKELLMNNMLNDVPTPWAMYFQDSATPNMEGIMELHNN. Residues 40 to 56 traverse the membrane as a helical segment; that stretch reads VVFYLIIMLCFVTYMLY. Topologically, residues 57–87 are mitochondrial matrix; the sequence is NISTVYNKSAVAYKYMNHGQFIEMVWTTFPA. Residues 88-104 form a helical membrane-spanning segment; it reads VMLLIMAFPSFMLLYIC. Over 105–248 the chain is Mitochondrial intermembrane; it reads DEVMAPAMTI…ADFLTWIDEQ (144 aa). Residues H183, C218, E220, C222, H226, and M229 each coordinate Cu cation. Mg(2+) is bound at residue E220.

The protein belongs to the cytochrome c oxidase subunit 2 family. As to quaternary structure, component of the cytochrome c oxidase (complex IV, CIV), a multisubunit enzyme composed of a catalytic core of 3 subunits and several supernumerary subunits. The complex exists as a monomer or a dimer and forms supercomplexes (SCs) in the inner mitochondrial membrane with ubiquinol-cytochrome c oxidoreductase (cytochrome b-c1 complex, complex III, CIII). Requires Cu cation as cofactor.

The protein resides in the mitochondrion inner membrane. The enzyme catalyses 4 Fe(II)-[cytochrome c] + O2 + 8 H(+)(in) = 4 Fe(III)-[cytochrome c] + 2 H2O + 4 H(+)(out). In terms of biological role, component of the cytochrome c oxidase, the last enzyme in the mitochondrial electron transport chain which drives oxidative phosphorylation. The respiratory chain contains 3 multisubunit complexes succinate dehydrogenase (complex II, CII), ubiquinol-cytochrome c oxidoreductase (cytochrome b-c1 complex, complex III, CIII) and cytochrome c oxidase (complex IV, CIV), that cooperate to transfer electrons derived from NADH and succinate to molecular oxygen, creating an electrochemical gradient over the inner membrane that drives transmembrane transport and the ATP synthase. Cytochrome c oxidase is the component of the respiratory chain that catalyzes the reduction of oxygen to water. Electrons originating from reduced cytochrome c in the intermembrane space (IMS) are transferred via the dinuclear copper A center (CU(A)) of subunit 2 and heme A of subunit 1 to the active site in subunit 1, a binuclear center (BNC) formed by heme A3 and copper B (CU(B)). The BNC reduces molecular oxygen to 2 water molecules using 4 electrons from cytochrome c in the IMS and 4 protons from the mitochondrial matrix. In Brettanomyces naardenensis (Yeast), this protein is Cytochrome c oxidase subunit 2 (COX2).